A 341-amino-acid polypeptide reads, in one-letter code: N-acetyl-gamma-glutamyl-phosphate reductase (341 aa).

Cys145 is a catalytic residue.

This sequence belongs to the NAGSA dehydrogenase family. Type 1 subfamily.

It is found in the cytoplasm. The catalysed reaction is N-acetyl-L-glutamate 5-semialdehyde + phosphate + NADP(+) = N-acetyl-L-glutamyl 5-phosphate + NADPH + H(+). It functions in the pathway amino-acid biosynthesis; L-arginine biosynthesis; N(2)-acetyl-L-ornithine from L-glutamate: step 3/4. In terms of biological role, catalyzes the NADPH-dependent reduction of N-acetyl-5-glutamyl phosphate to yield N-acetyl-L-glutamate 5-semialdehyde. The polypeptide is N-acetyl-gamma-glutamyl-phosphate reductase (Streptomyces clavuligerus).